Consider the following 314-residue polypeptide: Triosephosphate isomerase, chloroplastic (314 aa).

Residues 1–22 are compositionally biased toward polar residues; it reads MAVASTSLASQLSGPKSLSQPY. A disordered region spans residues 1–25; it reads MAVASTSLASQLSGPKSLSQPYSGL. The transit peptide at 1–59 directs the protein to the chloroplast; sequence MAVASTSLASQLSGPKSLSQPYSGLRRSCPKLDQSHSSLFQHLSLSSSSRKASRAVVAM. 2 residues coordinate substrate: asparagine 70 and lysine 72. Histidine 154 (electrophile) is an active-site residue. Catalysis depends on glutamate 224, which acts as the Proton acceptor.

Belongs to the triosephosphate isomerase family. As to quaternary structure, homodimer.

Its subcellular location is the plastid. The protein localises to the chloroplast. It catalyses the reaction D-glyceraldehyde 3-phosphate = dihydroxyacetone phosphate. It functions in the pathway carbohydrate biosynthesis; Calvin cycle. This chain is Triosephosphate isomerase, chloroplastic (TPI), found in Fragaria ananassa (Strawberry).